A 541-amino-acid polypeptide reads, in one-letter code: Chaperonin GroEL 1 (541 aa).

ATP contacts are provided by residues 29 to 32 (TLGP), 86 to 90 (DGTTT), Gly-413, 477 to 479 (NAA), and Asp-493.

The protein belongs to the chaperonin (HSP60) family. In terms of assembly, forms a cylinder of 14 subunits composed of two heptameric rings stacked back-to-back. Interacts with the co-chaperonin GroES.

Its subcellular location is the cytoplasm. The catalysed reaction is ATP + H2O + a folded polypeptide = ADP + phosphate + an unfolded polypeptide.. Functionally, together with its co-chaperonin GroES, plays an essential role in assisting protein folding. The GroEL-GroES system forms a nano-cage that allows encapsulation of the non-native substrate proteins and provides a physical environment optimized to promote and accelerate protein folding. The polypeptide is Chaperonin GroEL 1 (Paenarthrobacter aurescens (strain TC1)).